Consider the following 469-residue polypeptide: Nuclear hormone receptor family member nhr-154 (469 aa).

Residues 80 to 159 (PSKCLVCRNP…VGMNPMAIQA (80 aa)) constitute a DNA-binding region (nuclear receptor). 2 consecutive NR C4-type zinc fingers follow at residues 83–103 (CLVCRNPAIGYHYDVPSCNGC) and 119–142 (CAKQKKCMDGTEPVDMSKRLCRAC). Residues 230 to 459 (LDSKPVLVVT…KMGTTFRKCI (230 aa)) enclose the NR LBD domain.

The protein belongs to the nuclear hormone receptor family.

Its subcellular location is the nucleus. Its function is as follows. Orphan nuclear receptor. In Caenorhabditis elegans, this protein is Nuclear hormone receptor family member nhr-154 (nhr-154).